Consider the following 185-residue polypeptide: Threonylcarbamoyl-AMP synthase (185 aa).

In terms of domain architecture, YrdC-like spans 4-185; it reads SFRVQQAARE…LATGEVVRPG (182 aa).

This sequence belongs to the SUA5 family. TsaC subfamily.

Its subcellular location is the cytoplasm. The catalysed reaction is L-threonine + hydrogencarbonate + ATP = L-threonylcarbamoyladenylate + diphosphate + H2O. In terms of biological role, required for the formation of a threonylcarbamoyl group on adenosine at position 37 (t(6)A37) in tRNAs that read codons beginning with adenine. Catalyzes the conversion of L-threonine, HCO(3)(-)/CO(2) and ATP to give threonylcarbamoyl-AMP (TC-AMP) as the acyladenylate intermediate, with the release of diphosphate. The sequence is that of Threonylcarbamoyl-AMP synthase from Pseudomonas putida (strain ATCC 47054 / DSM 6125 / CFBP 8728 / NCIMB 11950 / KT2440).